A 749-amino-acid chain; its full sequence is Phosphate-regulating neutral endopeptidase PHEX (749 aa).

Topologically, residues 1–20 (MEAETGSSVETGKKANRGTR) are cytoplasmic. A helical; Signal-anchor for type II membrane protein transmembrane segment spans residues 21-41 (IALVVFVGGTLVLGTILFLVS). Topologically, residues 42–641 (QGLLSLQAKQ…LNVKGKRTLG (600 aa)) are extracellular. In terms of domain architecture, Peptidase M13 spans 53-749 (YCLKPECIEA…NRGMDSCRLW (697 aa)). Cys-54 and Cys-59 are disulfide-bonded. 7 N-linked (GlcNAc...) asparagine glycosylation sites follow: Asn-71, Asn-238, Asn-263, Asn-290, Asn-301, Asn-377, and Asn-484. Cystine bridges form between Cys-77–Cys-733, Cys-85–Cys-693, Cys-142–Cys-406, and Cys-617–Cys-746. Residue His-580 coordinates Zn(2+). Residue Glu-581 is part of the active site. Zn(2+)-binding residues include His-584 and Glu-642. Asp-646 functions as the Proton donor in the catalytic mechanism. The N-linked (GlcNAc...) asparagine glycan is linked to Asn-736.

The protein belongs to the peptidase M13 family. In terms of assembly, interacts with MEPE; the interaction is zinc-dependent (via ASARM motif). The cofactor is Zn(2+). As to expression, specifically expressed in ovary. Expressed at low levels in kidney.

It is found in the cell membrane. Functionally, peptidase that cleaves SIBLING (small integrin-binding ligand, N-linked glycoprotein)-derived ASARM peptides, thus regulating their biological activity. Cleaves ASARM peptides between Ser and Glu or Asp residues. Regulates osteogenic cell differentiation and bone mineralization through the cleavage of the MEPE-derived ASARM peptide. Promotes dentin mineralization and renal phosphate reabsorption by cleaving DMP1- and MEPE-derived ASARM peptides. Inhibits the cleavage of MEPE by CTSB/cathepsin B thus preventing MEPE degradation. This chain is Phosphate-regulating neutral endopeptidase PHEX (PHEX), found in Homo sapiens (Human).